The following is a 492-amino-acid chain: Cytochrome P450 26A1 (492 aa).

Cys438 is a heme binding site.

Belongs to the cytochrome P450 family. The cofactor is heme.

It is found in the endoplasmic reticulum membrane. Its subcellular location is the microsome membrane. The enzyme catalyses all-trans-retinoate + reduced [NADPH--hemoprotein reductase] + O2 = all-trans-(4S)-hydroxyretinoate + oxidized [NADPH--hemoprotein reductase] + H2O + H(+). In terms of biological role, a cytochrome P450 monooxygenase involved in the metabolism of all-trans retinoic acid (atRA), a signaling molecule that binds to retinoic acid receptors and regulates gene transcription. Mechanistically, uses molecular oxygen inserting one oxygen atom into a substrate, and reducing the second into a water molecule, with two electrons provided by NADPH via cytochrome P450 reductase (CPR; NADPH-ferrihemoprotein reductase). Catalyzes the hydroxylation of carbon hydrogen bonds of atRA primarily at C-4. Has no activity toward 9-cis and 13-cis retinoic acid stereoisomers. May play a role in the oxidative metabolism of xenobiotics such as tazarotenic acid. This is Cytochrome P450 26A1 (cyp26a1) from Danio rerio (Zebrafish).